An 87-amino-acid chain; its full sequence is Bradykinin-potentiating peptide NDBP12 (87 aa).

The signal sequence occupies residues 1–22 (MNKRVLLVIFFVTLLVADEVNS). Residues 64 to 75 (PAEAPAPAAAAP) show a composition bias toward low complexity. The interval 64-87 (PAEAPAPAAAAPEEPPVEQRRRRR) is disordered.

It belongs to the non-disulfide-bridged peptide (NDBP) superfamily. Long chain multifunctional peptide (group 2) family. As to expression, expressed by the venom gland.

Its subcellular location is the secreted. Inhibits angiotensin-converting enzyme (ACE), but does not serve as substrate for the enzyme. Potentiates bradykinin (BK) on the isolated guinea pig ileum as well as the isolated rat uterus for contraction. Also potentiates in vivo the depressor effect of BK on arterial blood pressure in the normotensive anesthetized rat. In Lychas mucronatus (Chinese swimming scorpion), this protein is Bradykinin-potentiating peptide NDBP12.